The chain runs to 928 residues: Periplasmic nitrate reductase (928 aa).

A signal peptide (tat-type signal) is located at residues 1 to 33; it reads MAFSRREFLKSAAAASAASAVGMSVPSQLLAQA. Residues 40–96 form the 4Fe-4S Mo/W bis-MGD-type domain; it reads WRWDKSVCRFCGTGCGIMVATKNDQIVAVKGDPAAPVNRGLNCIKGYFNAKIMYGAD. Positions 47, 50, 54, and 82 each coordinate [4Fe-4S] cluster. Mo-bis(molybdopterin guanine dinucleotide) is bound by residues K84, Q152, N177, C181, 214–221, 265–267, M422, Q426, N532, 557–558, K580, D607, and 818–827; these read WGANMAEM, QTD, SD, and TGRVLEHWHS. W894 provides a ligand contact to substrate. Mo-bis(molybdopterin guanine dinucleotide)-binding residues include N902 and K919.

Belongs to the prokaryotic molybdopterin-containing oxidoreductase family. NasA/NapA/NarB subfamily. As to quaternary structure, component of the periplasmic nitrate reductase NapAB complex composed of NapA and NapB. The cofactor is [4Fe-4S] cluster. Requires Mo-bis(molybdopterin guanine dinucleotide) as cofactor. Post-translationally, predicted to be exported by the Tat system. The position of the signal peptide cleavage has not been experimentally proven.

It is found in the periplasm. It catalyses the reaction 2 Fe(II)-[cytochrome] + nitrate + 2 H(+) = 2 Fe(III)-[cytochrome] + nitrite + H2O. Its function is as follows. Catalytic subunit of the periplasmic nitrate reductase complex NapAB. Receives electrons from NapB and catalyzes the reduction of nitrate to nitrite. This Wolinella succinogenes (strain ATCC 29543 / DSM 1740 / CCUG 13145 / JCM 31913 / LMG 7466 / NCTC 11488 / FDC 602W) (Vibrio succinogenes) protein is Periplasmic nitrate reductase.